Reading from the N-terminus, the 341-residue chain is Ribosomal RNA small subunit methyltransferase H (341 aa).

Residues 47-49, Asp-64, Phe-91, Asp-109, and Gln-116 contribute to the S-adenosyl-L-methionine site; that span reads GGY.

Belongs to the methyltransferase superfamily. RsmH family.

Its subcellular location is the cytoplasm. It catalyses the reaction cytidine(1402) in 16S rRNA + S-adenosyl-L-methionine = N(4)-methylcytidine(1402) in 16S rRNA + S-adenosyl-L-homocysteine + H(+). Specifically methylates the N4 position of cytidine in position 1402 (C1402) of 16S rRNA. In Rhizobium rhizogenes (strain K84 / ATCC BAA-868) (Agrobacterium radiobacter), this protein is Ribosomal RNA small subunit methyltransferase H.